We begin with the raw amino-acid sequence, 88 residues long: Small ribosomal subunit protein uS19 (88 aa).

The protein belongs to the universal ribosomal protein uS19 family.

Functionally, protein S19 forms a complex with S13 that binds strongly to the 16S ribosomal RNA. The protein is Small ribosomal subunit protein uS19 of Chlamydia caviae (strain ATCC VR-813 / DSM 19441 / 03DC25 / GPIC) (Chlamydophila caviae).